Consider the following 337-residue polypeptide: Autophagy protein 5 (337 aa).

Residue K128 forms a Glycyl lysine isopeptide (Lys-Gly) (interchain with G-Cter in ATG12) linkage. Residues 271-290 (RAQTSGEERSIDDTEEADGS) form a disordered region. Positions 276–290 (GEERSIDDTEEADGS) are enriched in basic and acidic residues.

The protein belongs to the ATG5 family. Conjugated to ATG12. Conjugated to ATG12; which is essential for autophagy. Conjugation with ATG12 involves ATG7 as an E1-like activating enzyme and ATG10 as an E2-like conjugating enzyme. In terms of tissue distribution, ubiquitous.

It localises to the cytoplasm. In terms of biological role, required for autophagy. Conjugation to ATG12 is essential for plant nutrient recycling. Involved in a negative feedback loop that modulates NPR1-dependent salicylic acid (SA) signaling and limits senescence and immunity-related programmed cell death (PCD) in plants. Involved in complete proteolysis of chloroplast stroma proteins in senescent leaves. Involved in the degradation of damaged peroxisomes. This Arabidopsis thaliana (Mouse-ear cress) protein is Autophagy protein 5.